A 197-amino-acid polypeptide reads, in one-letter code: MIGRLRGIVAYKAPPWLVVDVNGVGYELEAPMSTFYDLPELGREVTLYTHYSQKEDSVSLYGFLREGERRLFRDVQKVSGIGAKIALAVLSGVTVEEFARMVQAGDITALTRIPGIGKKTAERMVLELRDRAAQFGAGGALPTGSGPAPADPLSDATVALQQLGYKPAEAARMAREAFNEGDEVAIVIRKALQSALR.

The segment at 1–64 (MIGRLRGIVA…EDSVSLYGFL (64 aa)) is domain I. A domain II region spans residues 65–143 (REGERRLFRD…QFGAGGALPT (79 aa)). A flexible linker region spans residues 144–153 (GSGPAPADPL). The tract at residues 153–197 (LSDATVALQQLGYKPAEAARMAREAFNEGDEVAIVIRKALQSALR) is domain III.

The protein belongs to the RuvA family. As to quaternary structure, homotetramer. Forms an RuvA(8)-RuvB(12)-Holliday junction (HJ) complex. HJ DNA is sandwiched between 2 RuvA tetramers; dsDNA enters through RuvA and exits via RuvB. An RuvB hexamer assembles on each DNA strand where it exits the tetramer. Each RuvB hexamer is contacted by two RuvA subunits (via domain III) on 2 adjacent RuvB subunits; this complex drives branch migration. In the full resolvosome a probable DNA-RuvA(4)-RuvB(12)-RuvC(2) complex forms which resolves the HJ.

The protein localises to the cytoplasm. Functionally, the RuvA-RuvB-RuvC complex processes Holliday junction (HJ) DNA during genetic recombination and DNA repair, while the RuvA-RuvB complex plays an important role in the rescue of blocked DNA replication forks via replication fork reversal (RFR). RuvA specifically binds to HJ cruciform DNA, conferring on it an open structure. The RuvB hexamer acts as an ATP-dependent pump, pulling dsDNA into and through the RuvAB complex. HJ branch migration allows RuvC to scan DNA until it finds its consensus sequence, where it cleaves and resolves the cruciform DNA. This Stenotrophomonas maltophilia (strain R551-3) protein is Holliday junction branch migration complex subunit RuvA.